Consider the following 511-residue polypeptide: AMP phosphorylase (511 aa).

Residues G168, 194–199, and T203 each bind AMP; that span reads SRAITS. The Proton donor role is filled by D256. Residues S262 and K286 each coordinate AMP.

It belongs to the thymidine/pyrimidine-nucleoside phosphorylase family. Type 2 subfamily.

The catalysed reaction is AMP + phosphate = alpha-D-ribose 1,5-bisphosphate + adenine. The enzyme catalyses CMP + phosphate = cytosine + alpha-D-ribose 1,5-bisphosphate. It catalyses the reaction UMP + phosphate = alpha-D-ribose 1,5-bisphosphate + uracil. Functionally, catalyzes the conversion of AMP and phosphate to adenine and ribose 1,5-bisphosphate (R15P). Exhibits phosphorylase activity toward CMP and UMP in addition to AMP. Functions in an archaeal AMP degradation pathway, together with R15P isomerase and RubisCO. In Thermofilum pendens (strain DSM 2475 / Hrk 5), this protein is AMP phosphorylase.